The sequence spans 51 residues: uncharacterized protein (51 aa).

It to E.coli YdaF.

This is an uncharacterized protein from Escherichia coli O157:H7.